A 674-amino-acid polypeptide reads, in one-letter code: MKYWLKKSSWLLAGSLLSTPLAMANEFSASFKGTDIQEFINIVGRNLEKTIIVDPSVRGKVDVRSFDTLNEEQYYSFFLSVLEVYGFAVVEMDNGVLKVIKSKDAKTSAIPVLSGEERANGDEVITQVVAVKNVSVRELSPLLRQLIDNAGAGNVVHYDPANIILITGRAAVVNRLAEIIRRVDQAGDKEIEVVELNNASAAEMVRIVEALNKTTDAQNTPEFLKPKFVADERTNSILISGDPKVRERLKRLIKQLDVEMAAKGNNRVVYLKYAKAEDLVEVLKGVSENLQAEKGTGQPTTSKRNEVMIAAHADTNSLVLTAPQDIMNAMLEVIGQLDIRRAQVLIEALIVEMAEGDGINLGVQWGSLESGSVIQYGNTGASIGNVMIGLEEAKDTTQTKAVYDTNNNFLRNETTTTKGDYTKLASALSSIQGAAVSIAMGDWTALINAVSNDSSSNILSSPSITVMDNGEASFIVGEEVPVITGSTAGSNNDNPFQTVDRKEVGIKLKVVPQINEGNSVQLNIEQEVSNVLGANGAVDVRFAKRQLNTSVMVQDGQMLVLGGLIDERALESESKVPLLGDIPLLGQLFRSTSSQVEKKNLMVFIKPTIIRDGVTADGITQRKYNYIRAEQLFRAEKGLRLLDDASVPVLPKFGDDRRHSPEIQAFIEQMEAKQ.

The signal sequence occupies residues 1–24 (MKYWLKKSSWLLAGSLLSTPLAMA). The N0 stretch occupies residues 25–121 (NEFSASFKGT…VLSGEERANG (97 aa)). Positions 123-187 (EVITQVVAVK…EIIRRVDQAG (65 aa)) are N1. The segment at 188–261 (DKEIEVVELN…LIKQLDVEMA (74 aa)) is N2. The N3 stretch occupies residues 264–338 (GNNRVVYLKY…AMLEVIGQLD (75 aa)). The tract at residues 343 to 612 (QVLIEALIVE…VFIKPTIIRD (270 aa)) is secretin. Positions 395 to 417 (DTTQTKAVYDTNNNFLRNETTTT) are cap gate. Residues 614–674 (VTADGITQRK…AFIEQMEAKQ (61 aa)) form a s domain region.

It belongs to the bacterial secretin family. GSP D subfamily. In terms of assembly, forms a cylindrical channel with 15 subunits; unlike E.coli no 16-subunit channels are seen. The closed pentadeacameric channels are 195 Angstroms long and 145 Angstroms in diameter. Each subunit turns in a clock-wise manner around the channel.

The protein resides in the cell outer membrane. Functionally, involved in a type II secretion system (T2SS, formerly general secretion pathway, GSP) for the export of proteins. Required for secretion of cholera toxin through the outer membrane. This subunit forms the outer membrane channel. The chain is Secretin GspD (epsD) from Vibrio cholerae serotype O1 (strain ATCC 39315 / El Tor Inaba N16961).